Consider the following 160-residue polypeptide: Deoxyuridine 5'-triphosphate nucleotidohydrolase (160 aa).

Residues 79–81, Asn92, 96–98, and Lys106 contribute to the substrate site; these read RSG and TVD.

Belongs to the dUTPase family. Mg(2+) is required as a cofactor.

The enzyme catalyses dUTP + H2O = dUMP + diphosphate + H(+). The protein operates within pyrimidine metabolism; dUMP biosynthesis; dUMP from dCTP (dUTP route): step 2/2. Functionally, this enzyme is involved in nucleotide metabolism: it produces dUMP, the immediate precursor of thymidine nucleotides and it decreases the intracellular concentration of dUTP so that uracil cannot be incorporated into DNA. The sequence is that of Deoxyuridine 5'-triphosphate nucleotidohydrolase from Sinorhizobium medicae (strain WSM419) (Ensifer medicae).